A 406-amino-acid polypeptide reads, in one-letter code: Succinylornithine transaminase (406 aa).

The residue at position 252 (Lys-252) is an N6-(pyridoxal phosphate)lysine.

It belongs to the class-III pyridoxal-phosphate-dependent aminotransferase family. AstC subfamily. Pyridoxal 5'-phosphate serves as cofactor.

The catalysed reaction is N(2)-succinyl-L-ornithine + 2-oxoglutarate = N-succinyl-L-glutamate 5-semialdehyde + L-glutamate. Its pathway is amino-acid degradation; L-arginine degradation via AST pathway; L-glutamate and succinate from L-arginine: step 3/5. Functionally, catalyzes the transamination of N(2)-succinylornithine and alpha-ketoglutarate into N(2)-succinylglutamate semialdehyde and glutamate. Can also act as an acetylornithine aminotransferase. The sequence is that of Succinylornithine transaminase from Escherichia coli O127:H6 (strain E2348/69 / EPEC).